The sequence spans 1404 residues: DNA-directed RNA polymerase subunit beta' (1404 aa).

Zn(2+)-binding residues include C70, C72, C85, and C88. 3 residues coordinate Mg(2+): D460, D462, and D464. Zn(2+) is bound by residues C825, C899, C906, and C909.

This sequence belongs to the RNA polymerase beta' chain family. In terms of assembly, the RNAP catalytic core consists of 2 alpha, 1 beta, 1 beta' and 1 omega subunit. When a sigma factor is associated with the core the holoenzyme is formed, which can initiate transcription. It depends on Mg(2+) as a cofactor. Requires Zn(2+) as cofactor.

It catalyses the reaction RNA(n) + a ribonucleoside 5'-triphosphate = RNA(n+1) + diphosphate. Functionally, DNA-dependent RNA polymerase catalyzes the transcription of DNA into RNA using the four ribonucleoside triphosphates as substrates. The protein is DNA-directed RNA polymerase subunit beta' of Nitrosomonas europaea (strain ATCC 19718 / CIP 103999 / KCTC 2705 / NBRC 14298).